The chain runs to 24 residues: Lactadherin (24 aa).

The protein resides in the membrane. It is found in the secreted. The protein localises to the cytoplasmic vesicle. Its subcellular location is the secretory vesicle. It localises to the acrosome membrane. In terms of biological role, specific ligand for the alpha-v/beta-3 and alpha-v/beta-5 receptors. Also binds to phosphatidylserine-enriched cell surfaces in a receptor-independent manner. Zona pellucida-binding protein which may play a role in gamete interaction. Contributes to phagocytic removal of apoptotic cells in many tissues. Plays an important role in the maintenance of intestinal epithelial homeostasis and the promotion of mucosal healing. Promotes VEGF-dependent neovascularization. The protein is Lactadherin of Equus asinus (Donkey).